The following is a 487-amino-acid chain: GTPase Der (487 aa).

EngA-type G domains are found at residues 3–166 (PVIA…PRDA) and 193–366 (IKIA…QSAV). GTP-binding positions include 9–16 (GRPNVGKS), 56–60 (DTGGI), 118–121 (NKID), 199–206 (GRPNVGKS), 246–250 (DTAGV), and 311–314 (NKWD). In terms of domain architecture, KH-like spans 367–451 (TRWPTSRLTQ…PIRIEYKGGE (85 aa)). A compositionally biased stretch (basic and acidic residues) spans 448-461 (KGGENPYEGKKNTL). Residues 448 to 487 (KGGENPYEGKKNTLTDRQVNKKRRLMSHHKKAEKKRRDKR) are disordered. The segment covering 467 to 487 (NKKRRLMSHHKKAEKKRRDKR) has biased composition (basic residues).

The protein belongs to the TRAFAC class TrmE-Era-EngA-EngB-Septin-like GTPase superfamily. EngA (Der) GTPase family. In terms of assembly, associates with the 50S ribosomal subunit.

Its function is as follows. GTPase that plays an essential role in the late steps of ribosome biogenesis. This chain is GTPase Der, found in Pseudomonas putida (strain ATCC 700007 / DSM 6899 / JCM 31910 / BCRC 17059 / LMG 24140 / F1).